The following is a 146-amino-acid chain: D-aminoacyl-tRNA deacylase (146 aa).

The Gly-cisPro motif, important for rejection of L-amino acids motif lies at 137-138 (GP).

The protein belongs to the DTD family. Homodimer.

It is found in the cytoplasm. The catalysed reaction is glycyl-tRNA(Ala) + H2O = tRNA(Ala) + glycine + H(+). The enzyme catalyses a D-aminoacyl-tRNA + H2O = a tRNA + a D-alpha-amino acid + H(+). Its function is as follows. An aminoacyl-tRNA editing enzyme that deacylates mischarged D-aminoacyl-tRNAs. Also deacylates mischarged glycyl-tRNA(Ala), protecting cells against glycine mischarging by AlaRS. Acts via tRNA-based rather than protein-based catalysis; rejects L-amino acids rather than detecting D-amino acids in the active site. By recycling D-aminoacyl-tRNA to D-amino acids and free tRNA molecules, this enzyme counteracts the toxicity associated with the formation of D-aminoacyl-tRNA entities in vivo and helps enforce protein L-homochirality. This Thermodesulfovibrio yellowstonii (strain ATCC 51303 / DSM 11347 / YP87) protein is D-aminoacyl-tRNA deacylase.